Reading from the N-terminus, the 762-residue chain is Phosphoribosylformylglycinamidine synthase subunit PurL (762 aa).

Histidine 58 is a catalytic residue. ATP is bound by residues tyrosine 61 and arginine 105. Glutamate 107 contributes to the Mg(2+) binding site. Residues 108 to 111 (SHNH) and arginine 130 each bind substrate. Histidine 109 serves as the catalytic Proton acceptor. A Mg(2+)-binding site is contributed by aspartate 131. Glutamine 255 provides a ligand contact to substrate. Aspartate 283 contacts Mg(2+). 327–329 (ESQ) is a substrate binding site. Residues asparagine 513 and glycine 550 each coordinate ATP. Asparagine 551 serves as a coordination point for Mg(2+). A substrate-binding site is contributed by serine 553.

The protein belongs to the FGAMS family. Monomer. Part of the FGAM synthase complex composed of 1 PurL, 1 PurQ and 2 PurS subunits.

Its subcellular location is the cytoplasm. It catalyses the reaction N(2)-formyl-N(1)-(5-phospho-beta-D-ribosyl)glycinamide + L-glutamine + ATP + H2O = 2-formamido-N(1)-(5-O-phospho-beta-D-ribosyl)acetamidine + L-glutamate + ADP + phosphate + H(+). Its pathway is purine metabolism; IMP biosynthesis via de novo pathway; 5-amino-1-(5-phospho-D-ribosyl)imidazole from N(2)-formyl-N(1)-(5-phospho-D-ribosyl)glycinamide: step 1/2. In terms of biological role, part of the phosphoribosylformylglycinamidine synthase complex involved in the purines biosynthetic pathway. Catalyzes the ATP-dependent conversion of formylglycinamide ribonucleotide (FGAR) and glutamine to yield formylglycinamidine ribonucleotide (FGAM) and glutamate. The FGAM synthase complex is composed of three subunits. PurQ produces an ammonia molecule by converting glutamine to glutamate. PurL transfers the ammonia molecule to FGAR to form FGAM in an ATP-dependent manner. PurS interacts with PurQ and PurL and is thought to assist in the transfer of the ammonia molecule from PurQ to PurL. In Corynebacterium glutamicum (strain ATCC 13032 / DSM 20300 / JCM 1318 / BCRC 11384 / CCUG 27702 / LMG 3730 / NBRC 12168 / NCIMB 10025 / NRRL B-2784 / 534), this protein is Phosphoribosylformylglycinamidine synthase subunit PurL.